The following is a 249-amino-acid chain: Enolase-phosphatase E1 (249 aa).

2 residues coordinate Mg(2+): Asp-14 and Glu-16. Residues 141-142 and Lys-175 contribute to the substrate site; that span reads SS. Asp-200 serves as a coordination point for Mg(2+).

The protein belongs to the HAD-like hydrolase superfamily. MasA/MtnC family. Monomer. The cofactor is Mg(2+).

It is found in the cytoplasm. It localises to the nucleus. It catalyses the reaction 5-methylsulfanyl-2,3-dioxopentyl phosphate + H2O = 1,2-dihydroxy-5-(methylsulfanyl)pent-1-en-3-one + phosphate. Its pathway is amino-acid biosynthesis; L-methionine biosynthesis via salvage pathway; L-methionine from S-methyl-5-thio-alpha-D-ribose 1-phosphate: step 3/6. It participates in amino-acid biosynthesis; L-methionine biosynthesis via salvage pathway; L-methionine from S-methyl-5-thio-alpha-D-ribose 1-phosphate: step 4/6. Functionally, bifunctional enzyme that catalyzes the enolization of 2,3-diketo-5-methylthiopentyl-1-phosphate (DK-MTP-1-P) into the intermediate 2-hydroxy-3-keto-5-methylthiopentenyl-1-phosphate (HK-MTPenyl-1-P), which is then dephosphorylated to form the acireductone 1,2-dihydroxy-3-keto-5-methylthiopentene (DHK-MTPene). This chain is Enolase-phosphatase E1, found in Drosophila virilis (Fruit fly).